A 72-amino-acid chain; its full sequence is Bowman-Birk type proteinase inhibitor (72 aa).

7 disulfide bridges follow: C8–C61, C9–C24, C12–C57, C14–C22, C31–C38, C35–C50, and C40–C48.

Belongs to the Bowman-Birk serine protease inhibitor family.

Its function is as follows. This inhibitor has two domains, each with separate antiprotease activity. 1 mole of inhibitor inhibits either 1 mole of trypsin or 2 moles of chymotrypsin, stoichiometrically. In Vicia sativa subsp. nigra (Common vetch), this protein is Bowman-Birk type proteinase inhibitor.